We begin with the raw amino-acid sequence, 675 residues long: Methionine--tRNA ligase (675 aa).

A 'HIGH' region motif is present at residues 15–25 (PYANGSIHLGH). Residues Cys-146, Cys-149, Cys-159, and Cys-162 each coordinate Zn(2+). Positions 332-336 (KMSKS) match the 'KMSKS' region motif. Residue Lys-335 participates in ATP binding. A tRNA-binding domain is found at 573-675 (DFAKVDMRIA…SGAQPGMQVK (103 aa)).

It belongs to the class-I aminoacyl-tRNA synthetase family. MetG type 1 subfamily. As to quaternary structure, homodimer. It depends on Zn(2+) as a cofactor.

The protein resides in the cytoplasm. It carries out the reaction tRNA(Met) + L-methionine + ATP = L-methionyl-tRNA(Met) + AMP + diphosphate. Its function is as follows. Is required not only for elongation of protein synthesis but also for the initiation of all mRNA translation through initiator tRNA(fMet) aminoacylation. This is Methionine--tRNA ligase from Yersinia pseudotuberculosis serotype I (strain IP32953).